The primary structure comprises 390 residues: 1-deoxy-D-xylulose 5-phosphate reductoisomerase (390 aa).

NADPH is bound by residues Thr10, Gly11, Ser12, Ile13, Gly36, Asn38, and Asn124. A 1-deoxy-D-xylulose 5-phosphate-binding site is contributed by Lys125. Glu126 is an NADPH binding site. Residue Asp150 coordinates Mn(2+). 1-deoxy-D-xylulose 5-phosphate-binding residues include Ser151, Glu152, Ser176, and His199. Residue Glu152 coordinates Mn(2+). Gly205 serves as a coordination point for NADPH. Residues Ser212, Asn217, Lys218, and Glu221 each contribute to the 1-deoxy-D-xylulose 5-phosphate site. Glu221 contacts Mn(2+).

Belongs to the DXR family. It depends on Mg(2+) as a cofactor. Mn(2+) serves as cofactor.

The catalysed reaction is 2-C-methyl-D-erythritol 4-phosphate + NADP(+) = 1-deoxy-D-xylulose 5-phosphate + NADPH + H(+). Its pathway is isoprenoid biosynthesis; isopentenyl diphosphate biosynthesis via DXP pathway; isopentenyl diphosphate from 1-deoxy-D-xylulose 5-phosphate: step 1/6. Catalyzes the NADPH-dependent rearrangement and reduction of 1-deoxy-D-xylulose-5-phosphate (DXP) to 2-C-methyl-D-erythritol 4-phosphate (MEP). This Microcystis aeruginosa (strain NIES-843 / IAM M-2473) protein is 1-deoxy-D-xylulose 5-phosphate reductoisomerase.